The primary structure comprises 205 residues: Outer-membrane lipoprotein carrier protein (205 aa).

The first 21 residues, 1-21 (MKKIVLLVTLVFSINYSFANA), serve as a signal peptide directing secretion.

This sequence belongs to the LolA family. As to quaternary structure, monomer.

The protein resides in the periplasm. Its function is as follows. Participates in the translocation of lipoproteins from the inner membrane to the outer membrane. Only forms a complex with a lipoprotein if the residue after the N-terminal Cys is not an aspartate (The Asp acts as a targeting signal to indicate that the lipoprotein should stay in the inner membrane). This Francisella philomiragia subsp. philomiragia (strain ATCC 25017 / CCUG 19701 / FSC 153 / O#319-036) protein is Outer-membrane lipoprotein carrier protein.